A 285-amino-acid polypeptide reads, in one-letter code: Putative ankyrin repeat protein R551 (285 aa).

ANK repeat units follow at residues 99–129, 157–186, 188–214, and 215–249; these read DLKS…PIKI, NDFD…LQDE, IGKI…EAFR, and SAPD…CIQQ.

This chain is Putative ankyrin repeat protein R551, found in Acanthamoeba polyphaga (Amoeba).